The following is a 229-amino-acid chain: Orotidine 5'-phosphate decarboxylase (229 aa).

Substrate contacts are provided by residues Asp11, Lys33, 60-69, Thr119, Arg180, Gln189, Gly209, and Arg210; that span reads DLKFHDIPNT. Residue Lys62 is the Proton donor of the active site.

It belongs to the OMP decarboxylase family. Type 1 subfamily. As to quaternary structure, homodimer.

The catalysed reaction is orotidine 5'-phosphate + H(+) = UMP + CO2. The protein operates within pyrimidine metabolism; UMP biosynthesis via de novo pathway; UMP from orotate: step 2/2. Its function is as follows. Catalyzes the decarboxylation of orotidine 5'-monophosphate (OMP) to uridine 5'-monophosphate (UMP). This is Orotidine 5'-phosphate decarboxylase from Dichelobacter nodosus (strain VCS1703A).